Here is a 49-residue protein sequence, read N- to C-terminus: uncharacterized protein (49 aa).

Positions 1-49 (MSNETFEQNEPKPTKVEELQPGDVEAVEDSTPVREITQTDHINKAMLQI) are disordered. A compositionally biased stretch (basic and acidic residues) spans 9 to 18 (NEPKPTKVEE).

This is an uncharacterized protein from Dictyostelium discoideum (Social amoeba).